The following is a 426-amino-acid chain: Phosphomethylpyrimidine synthase (426 aa).

Substrate contacts are provided by residues Asn65, Met94, Tyr123, His162, 184–186 (SRG), 225–228 (DGMR), and Glu264. His268 lines the Zn(2+) pocket. Tyr291 contacts substrate. His332 contacts Zn(2+). Positions 408, 411, and 415 each coordinate [4Fe-4S] cluster.

It belongs to the ThiC family. It depends on [4Fe-4S] cluster as a cofactor.

It catalyses the reaction 5-amino-1-(5-phospho-beta-D-ribosyl)imidazole + S-adenosyl-L-methionine = 4-amino-2-methyl-5-(phosphooxymethyl)pyrimidine + CO + 5'-deoxyadenosine + formate + L-methionine + 3 H(+). The protein operates within cofactor biosynthesis; thiamine diphosphate biosynthesis. Functionally, catalyzes the synthesis of the hydroxymethylpyrimidine phosphate (HMP-P) moiety of thiamine from aminoimidazole ribotide (AIR) in a radical S-adenosyl-L-methionine (SAM)-dependent reaction. In Methanococcus maripaludis (strain C6 / ATCC BAA-1332), this protein is Phosphomethylpyrimidine synthase.